The sequence spans 351 residues: Tetraacyldisaccharide 4'-kinase (351 aa).

47 to 54 (KAGGTGKT) contributes to the ATP binding site.

This sequence belongs to the LpxK family.

The enzyme catalyses a lipid A disaccharide + ATP = a lipid IVA + ADP + H(+). It functions in the pathway glycolipid biosynthesis; lipid IV(A) biosynthesis; lipid IV(A) from (3R)-3-hydroxytetradecanoyl-[acyl-carrier-protein] and UDP-N-acetyl-alpha-D-glucosamine: step 6/6. Functionally, transfers the gamma-phosphate of ATP to the 4'-position of a tetraacyldisaccharide 1-phosphate intermediate (termed DS-1-P) to form tetraacyldisaccharide 1,4'-bis-phosphate (lipid IVA). The chain is Tetraacyldisaccharide 4'-kinase from Cytophaga hutchinsonii (strain ATCC 33406 / DSM 1761 / CIP 103989 / NBRC 15051 / NCIMB 9469 / D465).